The sequence spans 227 residues: Ribose-5-phosphate isomerase A (227 aa).

Substrate is bound by residues 26–29 (TGST), 82–85 (DGAD), and 95–98 (KGGG). The Proton acceptor role is filled by glutamate 104. Lysine 122 is a substrate binding site.

This sequence belongs to the ribose 5-phosphate isomerase family. In terms of assembly, homodimer.

The enzyme catalyses aldehydo-D-ribose 5-phosphate = D-ribulose 5-phosphate. It functions in the pathway carbohydrate degradation; pentose phosphate pathway; D-ribose 5-phosphate from D-ribulose 5-phosphate (non-oxidative stage): step 1/1. In terms of biological role, catalyzes the reversible conversion of ribose-5-phosphate to ribulose 5-phosphate. This Streptococcus equi subsp. zooepidemicus (strain MGCS10565) protein is Ribose-5-phosphate isomerase A.